Consider the following 269-residue polypeptide: tRNA pseudouridine synthase A (269 aa).

The active-site Nucleophile is the aspartate 52. Tyrosine 110 serves as a coordination point for substrate.

The protein belongs to the tRNA pseudouridine synthase TruA family. In terms of assembly, homodimer.

The enzyme catalyses uridine(38/39/40) in tRNA = pseudouridine(38/39/40) in tRNA. Functionally, formation of pseudouridine at positions 38, 39 and 40 in the anticodon stem and loop of transfer RNAs. This is tRNA pseudouridine synthase A from Bacteroides thetaiotaomicron (strain ATCC 29148 / DSM 2079 / JCM 5827 / CCUG 10774 / NCTC 10582 / VPI-5482 / E50).